Here is a 241-residue protein sequence, read N- to C-terminus: Carboxy-S-adenosyl-L-methionine synthase (241 aa).

S-adenosyl-L-methionine contacts are provided by residues tyrosine 38, 63–65 (GCS), 88–89 (DN), 116–117 (DI), asparagine 131, and arginine 198.

It belongs to the class I-like SAM-binding methyltransferase superfamily. Cx-SAM synthase family. In terms of assembly, homodimer.

The enzyme catalyses prephenate + S-adenosyl-L-methionine = carboxy-S-adenosyl-L-methionine + 3-phenylpyruvate + H2O. Its function is as follows. Catalyzes the conversion of S-adenosyl-L-methionine (SAM) to carboxy-S-adenosyl-L-methionine (Cx-SAM). This is Carboxy-S-adenosyl-L-methionine synthase from Histophilus somni (strain 129Pt) (Haemophilus somnus).